Reading from the N-terminus, the 402-residue chain is Protein PMR5 (402 aa).

A helical; Signal-anchor for type II membrane protein transmembrane segment spans residues Leu-7 to Gln-23. Residues Gly-40–Gln-60 form a disordered region. The span at Ser-41–Ser-56 shows a compositional bias: low complexity. A GDS motif motif is present at residues Gly-140–Ser-142. The DCXHWCLPGXXDXWN motif signature appears at Asp-379–Asn-393.

Belongs to the PC-esterase family. TBL subfamily. As to expression, expressed in flowers, siliques, stems and leaves.

It is found in the membrane. In terms of biological role, required for nonhost resistance (NHR) during plant-microbe interactions. Plants mutated in PMR5 are resistant to powdery mildew species. May act as a bridging protein that binds pectin and other cell wall polysaccharides. Probably involved in maintaining esterification of pectins. May be involved in the specific O-acetylation of cell wall polymers. This is Protein PMR5 (PMR5) from Arabidopsis thaliana (Mouse-ear cress).